The following is a 671-amino-acid chain: DNA ligase (671 aa).

NAD(+) is bound by residues 32–36, 81–82, and Glu113; these read DAEYD and SL. Catalysis depends on Lys115, which acts as the N6-AMP-lysine intermediate. Positions 136, 173, 290, and 314 each coordinate NAD(+). Zn(2+) contacts are provided by Cys408, Cys411, Cys426, and Cys432. The 79-residue stretch at 593–671 folds into the BRCT domain; sequence EIDSPFAGKT…EAEMMRLLGE (79 aa).

Belongs to the NAD-dependent DNA ligase family. LigA subfamily. Mg(2+) is required as a cofactor. Mn(2+) serves as cofactor.

It carries out the reaction NAD(+) + (deoxyribonucleotide)n-3'-hydroxyl + 5'-phospho-(deoxyribonucleotide)m = (deoxyribonucleotide)n+m + AMP + beta-nicotinamide D-nucleotide.. Its function is as follows. DNA ligase that catalyzes the formation of phosphodiester linkages between 5'-phosphoryl and 3'-hydroxyl groups in double-stranded DNA using NAD as a coenzyme and as the energy source for the reaction. It is essential for DNA replication and repair of damaged DNA. This chain is DNA ligase, found in Klebsiella pneumoniae subsp. pneumoniae (strain ATCC 700721 / MGH 78578).